The chain runs to 281 residues: Putative rRNA methyltransferase YqxC (281 aa).

Residues 6–67 (ERLDVLLVER…NPLRYVSRGG (62 aa)) enclose the S4 RNA-binding domain.

This sequence belongs to the TlyA family.

The polypeptide is Putative rRNA methyltransferase YqxC (yqxC) (Bacillus subtilis (strain 168)).